A 655-amino-acid polypeptide reads, in one-letter code: Gastrulation defective protein 1 homolog (655 aa).

2 disordered regions span residues 1 to 54 (MQRG…EQMI) and 83 to 165 (AKVF…DEQS). Composition is skewed to basic and acidic residues over residues 23 to 36 (RSNE…KEST), 91 to 115 (QIEK…KEDD), and 134 to 146 (TDKE…SSKD). Residues 147 to 164 (EDSDDDDYSSDEDSDDEQ) show a composition bias toward acidic residues. WD repeat units lie at residues 180–219 (HGSR…SSMR), 227–268 (CENH…ECCK), 281–321 (GHVA…EQLQ), 330–369 (GLRT…VNTT), 377–416 (QKGS…QPLH), 422–467 (FSRY…EVQR), and 470–510 (VSNA…RGAK). 2 disordered regions span residues 544–580 (KSRT…VASS) and 633–655 (AIFS…EADK). Basic and acidic residues-rich tracts occupy residues 554–564 (KARMDPVKSQR) and 639–655 (LPAD…EADK).

Belongs to the WD repeat GAD-1 family.

The chain is Gastrulation defective protein 1 homolog from Drosophila melanogaster (Fruit fly).